A 369-amino-acid chain; its full sequence is IST1-like protein (369 aa).

Positions 12–59 form a coiled coil; the sequence is KLKVQLKLAVSRIQILKNKKANIVRDEKRNVAELLRKKNEESARIRVE. A disordered region spans residues 224–354; that stretch reads QIIQQQQQPQ…SSDTGYPDYD (131 aa). Low complexity-rich tracts occupy residues 225–239 and 246–270; these read IIQQ…SFPI and PTFS…SPQF. The segment covering 277 to 305 has biased composition (polar residues); it reads FYNNNSGNQTPQFPTISTNNSDGYSNDKF. Over residues 306-337 the composition is skewed to low complexity; sequence NNGNNNYNNNNNNNNNNNNNNNHNNNNNNNNN.

The protein belongs to the IST1 family.

The polypeptide is IST1-like protein (Dictyostelium discoideum (Social amoeba)).